A 140-amino-acid polypeptide reads, in one-letter code: Nucleoside diphosphate kinase (140 aa).

K9, F57, R85, T91, R102, and N112 together coordinate ATP. Catalysis depends on H115, which acts as the Pros-phosphohistidine intermediate.

Belongs to the NDK family. In terms of assembly, homotetramer. Mg(2+) is required as a cofactor.

It localises to the cytoplasm. The catalysed reaction is a 2'-deoxyribonucleoside 5'-diphosphate + ATP = a 2'-deoxyribonucleoside 5'-triphosphate + ADP. It carries out the reaction a ribonucleoside 5'-diphosphate + ATP = a ribonucleoside 5'-triphosphate + ADP. Major role in the synthesis of nucleoside triphosphates other than ATP. The ATP gamma phosphate is transferred to the NDP beta phosphate via a ping-pong mechanism, using a phosphorylated active-site intermediate. This chain is Nucleoside diphosphate kinase, found in Chlorobaculum tepidum (strain ATCC 49652 / DSM 12025 / NBRC 103806 / TLS) (Chlorobium tepidum).